We begin with the raw amino-acid sequence, 361 residues long: Cysteine-rich with EGF-like domain protein 2-B (361 aa).

Positions 1–24 are cleaved as a signal peptide; that stretch reads MNGSRAWRLAAWLLLCLSCSAAVA. In terms of domain architecture, EGF-like 1 spans 134–176; that stretch reads DCLACLGGSERPCHGNGFCSGDGTRSGDGSCRCKAEYTGSFCL. 3 cysteine pairs are disulfide-bonded: Cys-138–Cys-152, Cys-146–Cys-164, and Cys-166–Cys-175. An N-linked (GlcNAc...) asparagine glycan is attached at Asn-188. 2 FU repeats span residues 191-238 and 251-298; these read HAVC…EESP and SFLC…SEKL. The region spanning 288–329 is the EGF-like 2; calcium-binding domain; the sequence is DVDECDASEKLCLRENEVCLNTAGSYKCTCSEGFEDKEGNCV. Disulfide bonds link Cys-292-Cys-306, Cys-299-Cys-315, and Cys-317-Cys-328. The segment at 339–361 is disordered; sequence ITEGETGTPASDTNILNTAHEDL. The span at 346–355 shows a compositional bias: polar residues; it reads TPASDTNILN.

The protein belongs to the CRELD family.

It is found in the secreted. The protein resides in the endoplasmic reticulum. Its function is as follows. Possible role in neuronal acetylcholine receptor transport. The sequence is that of Cysteine-rich with EGF-like domain protein 2-B (creld2-b) from Xenopus laevis (African clawed frog).